Here is a 322-residue protein sequence, read N- to C-terminus: HPr kinase/phosphorylase (322 aa).

Catalysis depends on residues His146 and Lys167. Residue 161–168 (GDSGLGKS) participates in ATP binding. Position 168 (Ser168) interacts with Mg(2+). Residue Asp185 is the Proton acceptor; for phosphorylation activity. Proton donor; for dephosphorylation activity of the active site. An important for the catalytic mechanism of both phosphorylation and dephosphorylation region spans residues 209 to 218 (LEVRGLGLLD). Glu210 is a Mg(2+) binding site. Residue Arg250 is part of the active site. The segment at 271-276 (QVAAGR) is important for the catalytic mechanism of dephosphorylation.

It belongs to the HPrK/P family. In terms of assembly, homohexamer. The cofactor is Mg(2+).

It carries out the reaction [HPr protein]-L-serine + ATP = [HPr protein]-O-phospho-L-serine + ADP + H(+). The catalysed reaction is [HPr protein]-O-phospho-L-serine + phosphate + H(+) = [HPr protein]-L-serine + diphosphate. Its function is as follows. Catalyzes the ATP- as well as the pyrophosphate-dependent phosphorylation of a specific serine residue in HPr, a phosphocarrier protein of the phosphoenolpyruvate-dependent sugar phosphotransferase system (PTS). HprK/P also catalyzes the pyrophosphate-producing, inorganic phosphate-dependent dephosphorylation (phosphorolysis) of seryl-phosphorylated HPr (P-Ser-HPr). This is HPr kinase/phosphorylase from Paraburkholderia xenovorans (strain LB400).